The following is a 73-amino-acid chain: Dermaseptin-H4 (73 aa).

Residues 1–22 (MAFMKKSLFLVLFLGMVSLSIC) form the signal peptide. A propeptide spanning residues 23-43 (EEEKRENEDEAKQEDDEQSEM) is cleaved from the precursor. A disordered region spans residues 25 to 45 (EKRENEDEAKQEDDEQSEMKR). Residues 30-40 (EDEAKQEDDEQ) are compositionally biased toward acidic residues. Position 70 is a leucine amide (L70). Positions 72 to 73 (EQ) are excised as a propeptide.

As to expression, expressed by the skin glands.

It localises to the secreted. Has antibacterial activity against the Gram-negative bacteria E.coli ATCC 11775 (MIC=0.8 uM), and the Gram-positive bacteria S.aureus ATCC 12600 (MIC=0.4 uM) and M.luteus ATCC 49732 (MIC=0.8 uM). Does not inhibit the growth of the fungus C.albicans. Probably acts by disturbing membrane functions with its amphipathic structure. This Pithecopus azureus (Orange-legged monkey tree frog) protein is Dermaseptin-H4.